Reading from the N-terminus, the 412-residue chain is Tyrosine--tRNA ligase (412 aa).

Position 31 (tyrosine 31) interacts with L-tyrosine. A 'HIGH' region motif is present at residues 36–45; the sequence is PTAASLHIGH. L-tyrosine contacts are provided by tyrosine 162 and glutamine 166. A 'KMSKS' region motif is present at residues 222-226; the sequence is KIGKT. Residue lysine 225 participates in ATP binding. One can recognise an S4 RNA-binding domain in the interval 345–412; sequence KRWIDLFVGV…KKKKLVLHLI (68 aa).

It belongs to the class-I aminoacyl-tRNA synthetase family. TyrS type 1 subfamily. As to quaternary structure, homodimer.

It is found in the cytoplasm. The enzyme catalyses tRNA(Tyr) + L-tyrosine + ATP = L-tyrosyl-tRNA(Tyr) + AMP + diphosphate + H(+). Its function is as follows. Catalyzes the attachment of tyrosine to tRNA(Tyr) in a two-step reaction: tyrosine is first activated by ATP to form Tyr-AMP and then transferred to the acceptor end of tRNA(Tyr). The protein is Tyrosine--tRNA ligase of Chlamydia caviae (strain ATCC VR-813 / DSM 19441 / 03DC25 / GPIC) (Chlamydophila caviae).